Here is a 405-residue protein sequence, read N- to C-terminus: Acetate kinase (405 aa).

N7 lines the Mg(2+) pocket. K14 provides a ligand contact to ATP. Residue R98 coordinates substrate. D155 serves as the catalytic Proton donor/acceptor. ATP is bound by residues 214-218 (HLGNG), 289-291 (DLR), and 337-341 (GVGEN). Mg(2+) is bound at residue E390.

The protein belongs to the acetokinase family. As to quaternary structure, homodimer. Requires Mg(2+) as cofactor. Mn(2+) is required as a cofactor.

Its subcellular location is the cytoplasm. It catalyses the reaction acetate + ATP = acetyl phosphate + ADP. It participates in metabolic intermediate biosynthesis; acetyl-CoA biosynthesis; acetyl-CoA from acetate: step 1/2. Functionally, catalyzes the formation of acetyl phosphate from acetate and ATP. Can also catalyze the reverse reaction. The polypeptide is Acetate kinase (Gloeothece citriformis (strain PCC 7424) (Cyanothece sp. (strain PCC 7424))).